Consider the following 197-residue polypeptide: CASP-like protein 1B2 (197 aa).

Residue Ala-2 is modified to N-acetylalanine. At 2 to 17 the chain is on the cytoplasmic side; it reads AREKIVVAGGSTKSWK. The chain crosses the membrane as a helical span at residues 18–38; sequence LLLGLRVFAFMATLAAAIVMS. Over 39–69 the chain is Extracellular; the sequence is LNKETKTLVVATIGTLPIKATLTAKFQDTPA. Residues 70–90 form a helical membrane-spanning segment; the sequence is FVFFVIANVMVSFHNLLMIVL. Over 91–106 the chain is Cytoplasmic; sequence QIFSRKLEYKGVRLLS. A helical membrane pass occupies residues 107–127; it reads IAILDMLNATLVSAAANAAVF. Topologically, residues 128-156 are extracellular; that stretch reads VAELGKNGNKHAKWNKVCDRFATYCDHGA. A helical membrane pass occupies residues 157-177; the sequence is GALIAAFAGVILMLLVSSVSI. Residues 178-197 lie on the Cytoplasmic side of the membrane; the sequence is SRLLINSKHLSTTATTTAVV.

Belongs to the Casparian strip membrane proteins (CASP) family. In terms of assembly, homodimer and heterodimers.

The protein localises to the cell membrane. The sequence is that of CASP-like protein 1B2 from Arabidopsis lyrata subsp. lyrata (Lyre-leaved rock-cress).